Reading from the N-terminus, the 680-residue chain is Heterokaryon incompatibility protein 6, OR allele (680 aa).

Its function is as follows. Involved in the non-self-recognition during asexual growth of N.crassa. This process involves restriction of heterokaryon formation via genetic differences at 11 het loci, including mating type. The chain is Heterokaryon incompatibility protein 6, OR allele (het-6) from Neurospora crassa (strain ATCC 24698 / 74-OR23-1A / CBS 708.71 / DSM 1257 / FGSC 987).